The sequence spans 93 residues: uncharacterized protein (93 aa).

Residues 1–76 (MDSHTTEKRR…IQTIEPDESM (76 aa)) form the Sm domain.

As to quaternary structure, part of the core SMN complex at least composed of smn1, yip11/gem2, gem6, gem7 and gem8. Interacts with gem7; the interaction is direct.

In terms of biological role, the SMN complex catalyzes the assembly of small nuclear ribonucleoproteins (snRNPs), the building blocks of the spliceosome, and thereby plays an important role in the splicing of cellular pre-mRNAs. Most spliceosomal snRNPs contain a common set of Sm proteins smb1, smd1, smd2, smd3, sme1, smf1 and smg1 that assemble in a heptameric protein ring on the Sm site of the small nuclear RNA to form the core snRNP (Sm core). In the cytosol, the Sm proteins smd1, smd2, sme1, smf1 and smg1 (5Sm) are trapped in an inactive 6S pICln-Sm complex by the chaperone saf5. To complete assembly of core snRNPs, the SMN complex accepts 5Sm from saf5. Binding of snRNA inside 5Sm triggers eviction of the SMN complex, thereby allowing binding of smd3 and smb1 to complete assembly of the core snRNP. This is an uncharacterized protein from Schizosaccharomyces pombe (strain 972 / ATCC 24843) (Fission yeast).